The sequence spans 1394 residues: MNQEVLNIFNPVQAAPTFDQIRISLASPEKIRSWSFGEIKKPETINYRTFKPERDGLFCARIFGPTKDYECLCGKYKRMKYKGIICEKCGVEVTLARVRRERMGHIELASPVAHIWFLKSLPSRIAMMLDMPLKDIERVLYFEYYIVTEPGLTPLKQHQLLSEDDFMRAQDEYGDDSFTAEIGAEAIQNLLKAIDLDKEAERLREELAGTVSDMKQKKFSKRLKILEAFSESGNRPEWMVLTVVPVIPPELRPLVPLDGGRFATSDLNDLYRRVINRNNRLKRLIELRAPDIIIRNEKRMLQESVDALFDNGRRGRVITGANKRPLKSLADMLKGKQGRFRQNLLGKRVDYSGRSVIVVGPDLKLHECGLPKKMALELFKPFIYARLDAKGLSGTVKQSKRMVEREQPQVWDILEEVIREHPVMLNRAPTLHRLGIQAFEPKLIEGKAIQLHPLVCAAFNADFDGDQMAVHVPLSLEAQLEARVLMMSTNNILSPANGRPIIVPSQDIVLGLYYLSVAREGEPGEGKIFADLGEIEAAMDAGVVSLHAKIKSRFTEMDADGVVRRRVIDTTPGRMKIAALLPQHTAIGHRLIEKALTKKEIGNLIDVVYRHCGQKATVIFADQIMGLGFKEAAKAGISFGKDDIIIPKRKEAIVAETRTLAEEYEQQYADGLITKGEKYNKVVDAWAKATDRVADEMMAELQMKHKDENGREKEINAIYMMAHSGARGSQAQMKQLGGMRGLMAKPSGEIIETPIVSNFKEGLTVQEYFNSTHGARKGLADTALKTANSGYLTRRLVDVAQDCIIVEEDCGTTRGITLRAVVEGGDVLVSLGARVLGRFSAEDIKDPATGEIVVPADTYLTENMADLIEAAAVQSVKVRSVLTCEAKIGVCGACYGRDLARGTPVNIGEAVGVIAAQSIGEPGTQLTMRTFHIGGTAQVAEQSFFESSNDGTVRVTGATVVGTDGFLVVMSRNTAVSVLVDGKERENYKPPYGARLKIKDGDKVKRGQRLADWDPYTTPIITEVAGKIRAEDLVDGFSVREETDEATGIAQRVIADWRTSARASDLRPAMGVLAEDGSYVRLANGGEARYLMSVGAILSVGDGDMVKPGEVIARIPTEGAKTRDITGGLPRVAELFEARRPKDCAVIAEMDGRVEFGKDYKNKRRIKITPEVDADGNQGEPVEFLIPKGKHIAVHDGDFIARGEYIIDGNPDPHDILRILGVEALANFLVDEIQEVYRLQGVPINDKHIETIVRQMLQKVEILEPGDTGLIKGDHLDKPEFYVEQDRAVARGGRPATTQPVLLGITKASLQTKSFISAASFQETTRVLTEASVHGKTDTLEGLKENVIVGRLIPAGTGSYLRSLQRVAAKRDEQLAQQREDAMEPLPAVIAEEA.

4 residues coordinate Zn(2+): Cys-71, Cys-73, Cys-86, and Cys-89. 3 residues coordinate Mg(2+): Asp-462, Asp-464, and Asp-466. Residues Cys-810, Cys-884, Cys-891, and Cys-894 each contribute to the Zn(2+) site.

It belongs to the RNA polymerase beta' chain family. The RNAP catalytic core consists of 2 alpha, 1 beta, 1 beta' and 1 omega subunit. When a sigma factor is associated with the core the holoenzyme is formed, which can initiate transcription. Mg(2+) is required as a cofactor. Requires Zn(2+) as cofactor.

The enzyme catalyses RNA(n) + a ribonucleoside 5'-triphosphate = RNA(n+1) + diphosphate. DNA-dependent RNA polymerase catalyzes the transcription of DNA into RNA using the four ribonucleoside triphosphates as substrates. The chain is DNA-directed RNA polymerase subunit beta' from Caulobacter sp. (strain K31).